A 184-amino-acid polypeptide reads, in one-letter code: MPIDAWVREEVEIPEGVEVTVENNVVKVKGPKGELERELKYPGVKIFTEDGKVVVYKEFPRKKDIAIARTFKAHINNMIKGVTEGFTYKLKVVYSHFPVTVKVQGDEVIIENFLGEKNPRRAKILPGVTVKVRGQEITVEGIDKEKVGQTAANIEQATRITKWDRRVFQDGIYIVEKAGKPIKF.

The protein belongs to the universal ribosomal protein uL6 family. Part of the 50S ribosomal subunit.

Functionally, this protein binds to the 23S rRNA, and is important in its secondary structure. It is located near the subunit interface in the base of the L7/L12 stalk, and near the tRNA binding site of the peptidyltransferase center. This is Large ribosomal subunit protein uL6 from Thermococcus gammatolerans (strain DSM 15229 / JCM 11827 / EJ3).